The primary structure comprises 201 residues: Peroxiredoxin prdx-2 (201 aa).

The Thioredoxin domain occupies 10 to 168 (AFIGKPAPQF…TLRLVQAFQF (159 aa)). Cys55 functions as the Cysteine sulfenic acid (-SOH) intermediate in the catalytic mechanism.

The protein belongs to the peroxiredoxin family. AhpC/Prx1 subfamily. In terms of assembly, monomer and homodimer; disulfide-linked. Under nonstress conditions, present in the reduced monomeric form. Forms active hyperoxidized monomers and disulfide-linked homodimers upon oxidation by hydrogen peroxide. Forms active oxidized homodimers in response to the drug metformin. Post-translationally, the enzyme can be inactivated by further oxidation of the cysteine sulfenic acid (C(P)-SOH) to sulphinic acid (C(P)-SO2H) instead of its condensation to a disulfide bond. Expressed in the gonad, neurons and intestine (at protein level). Expressed in the pharyngeal inter-neuron I4 and the sensory interneuron I2. Expressed in the intestine, pharyngeal muscle 1, vulval muscle, body wall muscle, epithelial cells e1 and e3, and neurons in the head and tail.

The protein localises to the cytoplasm. The catalysed reaction is a hydroperoxide + [thioredoxin]-dithiol = an alcohol + [thioredoxin]-disulfide + H2O. With respect to regulation, activated following oxidation of the conserved redox-active cysteine residue, which subsequently allows for the oxidation and activation of substrates. Thiol-specific peroxidase that catalyzes the reduction of hydrogen peroxide and organic hydroperoxides to water and alcohols, respectively. In I2 pharyngeal neurons, required for the inhibition of feeding in response to light and hydrogen peroxide. In the intestine, plays a role in protecting cells against oxidative stress by detoxifying peroxides such as hydrogen peroxide. In addition, plays a role in the recovery from oxidative stress induced by hydrogen peroxide. In its hyperoxidized form (induced by hydrogen peroxide), confers protection against heat stress. However, has a low tendency for overoxidation during the normal lifespan. Increases sensitivity to cytotoxicity caused by metalloids and heavy metals such as arsenic and cadmium by playing a role in inhibiting the expression of phase II detoxification genes such as gcs-1 in intestinal cells. In addition, in response to arsenite, promotes the secretion of the insulin ligand daf-28 into the pseudocoelom, which negatively regulates the activities of daf-16 and skn-1. Plays a role in promoting longevity. Plays a role in the mitohormetic pathway by promoting the activation of pmk-1 in response to the drug metformin. This chain is Peroxiredoxin prdx-2, found in Caenorhabditis elegans.